A 640-amino-acid chain; its full sequence is uncharacterized protein (640 aa).

A run of 14 helical transmembrane segments spans residues 8–28 (GGVVTSGVGVAGVGVGLLGMF), 52–72 (LGGFFMALTGAVAAPVGCYLI), 90–110 (LFVAAMLLVPAAGSVTTFLLA), 136–156 (LWYAVMTQLGFIAILVGLVVL), 179–199 (VFMLTLVGFGSKAGLVPLHAW), 208–228 (PSPVSALMSAAMVNLGIYGIV), 241–261 (WWGLALLAVGGTSALYGVLQA), 277–297 (ENMGLITLALGAATLFADTGA), 298–318 (YGPASIAAAAAMLHMIAHAAF), 352–372 (TVFFGVAALGACGLPLGAGFV), 391–411 (IVALTTPLAVGVVALATGLSV), 446–466 (AIAAGACLVLAVAPLLVAPMV), 497–517 (IAPGVIAAAVLAAALAVAVLA), and 619–639 (GSVHRYLAYGALGVLIVLVVA).

Belongs to the complex I subunit 4 family.

Its subcellular location is the cell membrane. This is an uncharacterized protein from Mycobacterium tuberculosis (strain CDC 1551 / Oshkosh).